The primary structure comprises 352 residues: UDP-N-acetylglucosamine--N-acetylmuramyl-(pentapeptide) pyrophosphoryl-undecaprenol N-acetylglucosamine transferase 3 (352 aa).

Residues 11–13, R164, S194, and Q289 contribute to the UDP-N-acetyl-alpha-D-glucosamine site; that span reads SAG.

Belongs to the glycosyltransferase 28 family. MurG subfamily.

It localises to the cell membrane. It carries out the reaction di-trans,octa-cis-undecaprenyl diphospho-N-acetyl-alpha-D-muramoyl-L-alanyl-D-glutamyl-meso-2,6-diaminopimeloyl-D-alanyl-D-alanine + UDP-N-acetyl-alpha-D-glucosamine = di-trans,octa-cis-undecaprenyl diphospho-[N-acetyl-alpha-D-glucosaminyl-(1-&gt;4)]-N-acetyl-alpha-D-muramoyl-L-alanyl-D-glutamyl-meso-2,6-diaminopimeloyl-D-alanyl-D-alanine + UDP + H(+). It functions in the pathway cell wall biogenesis; peptidoglycan biosynthesis. In terms of biological role, cell wall formation. Catalyzes the transfer of a GlcNAc subunit on undecaprenyl-pyrophosphoryl-MurNAc-pentapeptide (lipid intermediate I) to form undecaprenyl-pyrophosphoryl-MurNAc-(pentapeptide)GlcNAc (lipid intermediate II). This is UDP-N-acetylglucosamine--N-acetylmuramyl-(pentapeptide) pyrophosphoryl-undecaprenol N-acetylglucosamine transferase 3 from Bacillus thuringiensis (strain Al Hakam).